The chain runs to 281 residues: Small ribosomal subunit biogenesis GTPase RsgA (281 aa).

Residues 59–212 (QNEFIRPKVA…LIDTPGFSSL (154 aa)) enclose the CP-type G domain. Residues 108–111 (TKAD) and 155–163 (GQSGVGKTT) each bind GTP. Cysteine 235, cysteine 240, histidine 242, and cysteine 250 together coordinate Zn(2+).

This sequence belongs to the TRAFAC class YlqF/YawG GTPase family. RsgA subfamily. In terms of assembly, monomer. Associates with 30S ribosomal subunit, binds 16S rRNA. It depends on Zn(2+) as a cofactor.

Its subcellular location is the cytoplasm. Its function is as follows. One of several proteins that assist in the late maturation steps of the functional core of the 30S ribosomal subunit. Helps release RbfA from mature subunits. May play a role in the assembly of ribosomal proteins into the subunit. Circularly permuted GTPase that catalyzes slow GTP hydrolysis, GTPase activity is stimulated by the 30S ribosomal subunit. This Mycoplasmopsis agalactiae (strain NCTC 10123 / CIP 59.7 / PG2) (Mycoplasma agalactiae) protein is Small ribosomal subunit biogenesis GTPase RsgA.